The primary structure comprises 638 residues: Acetolactate synthase 2, chloroplastic (638 aa).

The transit peptide at 1–39 (MATAATAAAALTGATTATPKSRRRAHHLATRRALAAPIR) directs the protein to the chloroplast. The disordered stretch occupies residues 44-67 (SRATPTAPPATPLRPWGPNEPRKG). E112 provides a ligand contact to thiamine diphosphate. A disulfide bond links C132 and C278. FAD contacts are provided by residues R214, 320 to 341 (HGTV…FGVR), and 363 to 382 (DIDP…ICAD). The segment at 455–535 (QHQMWAAQYY…VKVFVLNNQH (81 aa)) is thiamine pyrophosphate binding. Mg(2+) contacts are provided by D506 and N533.

This sequence belongs to the TPP enzyme family. Mg(2+) serves as cofactor. Thiamine diphosphate is required as a cofactor.

The protein resides in the plastid. The protein localises to the chloroplast. The catalysed reaction is 2 pyruvate + H(+) = (2S)-2-acetolactate + CO2. Its pathway is amino-acid biosynthesis; L-isoleucine biosynthesis; L-isoleucine from 2-oxobutanoate: step 1/4. It functions in the pathway amino-acid biosynthesis; L-valine biosynthesis; L-valine from pyruvate: step 1/4. This is Acetolactate synthase 2, chloroplastic (ALS2) from Zea mays (Maize).